A 722-amino-acid chain; its full sequence is Probable C-mannosyltransferase DPY19L4 (722 aa).

Residues 1-34 are disordered; the sequence is MAKEEGTSVEPRQRKKQRTSGSQEAKAEKIRRTP. Position 2 is an N-acetylalanine (Ala2). The segment covering 25–34 has biased composition (basic and acidic residues); sequence AKAEKIRRTP. The next 12 helical transmembrane spans lie at 51 to 71, 160 to 177, 183 to 201, 246 to 262, 268 to 284, 291 to 307, 313 to 331, 351 to 369, 420 to 440, 465 to 485, 487 to 507, and 521 to 541; these read IVIGCLAAVISGMMHVFYLSA, VYFYIGIVFGLQGMYVTA, WLMSGTWLAGMLTVAWFLI, FCYLLLSTSTYTFMMVW, VLFLQAVSLLLLDIFSV, YEVYKVYIFSLFLGYLL, ALLVSPLLSLVGAFMLVKC, FYLLCTLPVTLNLIVKMFV, LLPFYVLVLIICLLSMTQVFF, IIYHVIHTLLLGSLAMLMEGL, FIWTPYVCMLAAFGVCSPELW, and PMLLALILSMAVPTIIGLSLW.

This sequence belongs to the dpy-19 family.

The protein localises to the membrane. Functionally, probable C-mannosyltransferase that mediates C-mannosylation of tryptophan residues on target proteins. This Mus musculus (Mouse) protein is Probable C-mannosyltransferase DPY19L4 (Dpy19l4).